Here is a 351-residue protein sequence, read N- to C-terminus: Protein-glutamate methylesterase/protein-glutamine glutaminase (351 aa).

Residues 3-120 (KTLVVDDSAL…EISKIENELV (118 aa)) form the Response regulatory domain. Asp-54 carries the post-translational modification 4-aspartylphosphate. The CheB-type methylesterase domain maps to 160 to 347 (ILIGSSTGGP…EQIVRMIEVK (188 aa)). Active-site residues include Ser-165, His-192, and Asp-289.

The protein belongs to the CheB family. Phosphorylated by CheA. Phosphorylation of the N-terminal regulatory domain activates the methylesterase activity.

The protein localises to the cytoplasm. The catalysed reaction is [protein]-L-glutamate 5-O-methyl ester + H2O = L-glutamyl-[protein] + methanol + H(+). It carries out the reaction L-glutaminyl-[protein] + H2O = L-glutamyl-[protein] + NH4(+). Its function is as follows. Involved in chemotaxis. Part of a chemotaxis signal transduction system that modulates chemotaxis in response to various stimuli. Catalyzes the demethylation of specific methylglutamate residues introduced into the chemoreceptors (methyl-accepting chemotaxis proteins or MCP) by CheR. Also mediates the irreversible deamidation of specific glutamine residues to glutamic acid. This is Protein-glutamate methylesterase/protein-glutamine glutaminase from Methanococcoides burtonii (strain DSM 6242 / NBRC 107633 / OCM 468 / ACE-M).